We begin with the raw amino-acid sequence, 631 residues long: Mini-chromosome maintenance complex-binding protein (631 aa).

Composition is skewed to polar residues over residues 148 to 157 (ARVVPSTSYV) and 173 to 192 (TQCQQTKDISQGAQSSSESH). A disordered region spans residues 148–218 (ARVVPSTSYV…SSSSHCTSSL (71 aa)). A compositionally biased stretch (basic and acidic residues) spans 193–202 (GNTEPKRQET). Over residues 206 to 217 (SQDSSSSHCTSS) the composition is skewed to low complexity.

The protein belongs to the MCMBP family. In terms of assembly, interacts with the mcm complex: associates with the mcm3-7 complex which lacks mcm2, while it does not interact with the mcm complex when mcm2 is present (mcm2-7 complex).

It is found in the nucleus. Its function is as follows. Associated component of the mcm complex that acts as a regulator of DNA replication. Binds to the MCM complex during late S phase and promotes the disassembly of the mcm complex from chromatin, thereby acting as a key regulator of pre-replication complex (pre-RC) unloading from replicated DNA. Can dissociate the mcm complex without addition of ATP; probably acts by destabilizing interactions of each individual subunits of the mcm complex. Required for sister chromatid cohesion. The protein is Mini-chromosome maintenance complex-binding protein (mcmbp) of Danio rerio (Zebrafish).